The primary structure comprises 433 residues: MLDIQLLRKDLDGVAKRLADRGYTLDVAAFSALEAERRAIQTRTEELQARRNSLSKQIGAMKGKGEDTSAVMAEVGGIGDEMKASEVKLGEIQSRLSDLMLGMPNIAHESVPVGKDEADNVELRRWGTPRQFDFDVKDHVDVGTPLGLDFETGAKLAGARFTMLRGPIARLHRALAQFMLDTHTQLHGYSETYTPYIVNPEILYGTGQLPKFADDMFRVEKGGAENTITQYLISTSEISLTNTVRESIVDASALPIKLTAHSPCFRSEAGSYGRDTRGMIRQHQFDKVEMVQVVAPDTSYAALDEMVGHAEAILQKLGLPYRVITLCTGDMGFSAAKTFDLEVWLPAQNTYREISSCSNTEAFQARRMQARFRNAQGKPELVHTLNGSGLAVGRTLVAVLENYQNADGSVTVPEVLRPYMGGMERIDAPVQAS.

An L-serine-binding site is contributed by 235–237 (TSE). 266–268 (RSE) contacts ATP. E289 provides a ligand contact to L-serine. 353–356 (EISS) provides a ligand contact to ATP. S388 serves as a coordination point for L-serine.

It belongs to the class-II aminoacyl-tRNA synthetase family. Type-1 seryl-tRNA synthetase subfamily. In terms of assembly, homodimer. The tRNA molecule binds across the dimer.

The protein resides in the cytoplasm. The enzyme catalyses tRNA(Ser) + L-serine + ATP = L-seryl-tRNA(Ser) + AMP + diphosphate + H(+). It catalyses the reaction tRNA(Sec) + L-serine + ATP = L-seryl-tRNA(Sec) + AMP + diphosphate + H(+). It functions in the pathway aminoacyl-tRNA biosynthesis; selenocysteinyl-tRNA(Sec) biosynthesis; L-seryl-tRNA(Sec) from L-serine and tRNA(Sec): step 1/1. Catalyzes the attachment of serine to tRNA(Ser). Is also able to aminoacylate tRNA(Sec) with serine, to form the misacylated tRNA L-seryl-tRNA(Sec), which will be further converted into selenocysteinyl-tRNA(Sec). This Burkholderia vietnamiensis (strain G4 / LMG 22486) (Burkholderia cepacia (strain R1808)) protein is Serine--tRNA ligase.